The chain runs to 687 residues: Glycine--tRNA ligase beta subunit (687 aa).

The protein belongs to the class-II aminoacyl-tRNA synthetase family. In terms of assembly, tetramer of two alpha and two beta subunits.

Its subcellular location is the cytoplasm. It carries out the reaction tRNA(Gly) + glycine + ATP = glycyl-tRNA(Gly) + AMP + diphosphate. The polypeptide is Glycine--tRNA ligase beta subunit (Neisseria meningitidis serogroup C (strain 053442)).